The chain runs to 345 residues: Homeobox protein DBX1 (345 aa).

Disordered regions lie at residues 55–103 (PRGS…VSPA) and 241–345 (KERE…ITVS). The segment at residues 182-241 (GMLRRAVFSDVQRKALEKMFQKQKYISKPDRKKLAAKLGLKDSQVKIWFQNRRMKWRNSK) is a DNA-binding region (homeobox). The segment covering 300–309 (DPRHLRDPRL) has biased composition (basic and acidic residues). A compositionally biased stretch (acidic residues) spans 330 to 345 (SDSEDDEEGEEEITVS).

Belongs to the H2.0 homeobox family.

The protein resides in the nucleus. Could have a role in patterning the central nervous system during embryogenesis. Has a key role in regulating the distinct phenotypic features that distinguish two major classes of ventral interneurons, V0 and V1 neurons. Regulates the transcription factor profile, neurotransmitter phenotype, intraspinal migratory path and axonal trajectory of V0 neurons, features that differentiate them from an adjacent set of V1 neurons. The polypeptide is Homeobox protein DBX1 (DBX1) (Bos taurus (Bovine)).